A 173-amino-acid chain; its full sequence is Globin, cuticular isoform (173 aa).

The N-terminal stretch at 1–16 (MLWFVAVCFAIASVSA) is a signal peptide. The Globin domain maps to 17-166 (MSPADVKKHT…FNSEAQHQLE (150 aa)). Residue histidine 113 participates in heme b binding.

Belongs to the globin family. As to expression, expressed only by adult nematodes in the gut.

The protein localises to the secreted. Its subcellular location is the extracellular space. This chain is Globin, cuticular isoform (GLBC), found in Nippostrongylus brasiliensis (Rat hookworm).